The primary structure comprises 655 residues: A-type voltage-gated potassium channel KCND3 (655 aa).

Residues 1–182 lie on the Cytoplasmic side of the membrane; sequence MAAGVAAWLP…FENPHTSTLA (182 aa). Interaction with KCNIP1 stretches follow at residues 6–21 and 70–78; these read AAWLPFARAAAIGWMP and EKEFFFNED. Residues His-104, Cys-110, Cys-131, and Cys-132 each contribute to the Zn(2+) site. At Ser-153 the chain carries Phosphoserine. A helical membrane pass occupies residues 183-204; that stretch reads LVFYYVTGFFIAVSVITNVVET. Residues 205-223 lie on the Extracellular side of the membrane; that stretch reads VPCGTVPGSKELPCGERYS. A helical membrane pass occupies residues 224–246; the sequence is VAFFCLDTACVMIFTVEYLLRLF. The Cytoplasmic portion of the chain corresponds to 247-253; that stretch reads AAPSRYR. A helical membrane pass occupies residues 254 to 277; sequence FIRSVMSIIDVVAIMPYYIGLVMT. Topologically, residues 278-283 are extracellular; sequence NNEDVS. A helical; Voltage-sensor transmembrane segment spans residues 284–306; the sequence is GAFVTLRVFRVFRIFKFSRHSQG. At 307–318 the chain is on the cytoplasmic side; that stretch reads LRILGYTLKSCA. The chain crosses the membrane as a helical span at residues 319–343; sequence SELGFLLFSLTMAIIIFATVMFYAE. Over 344-352 the chain is Extracellular; that stretch reads KGSSASKFT. The helical intramembrane region spans 353-366; the sequence is SIPASFWYTIVTMT. Residues Thr-367, Leu-368, Gly-369, and Tyr-370 each contribute to the K(+) site. The short motif at 367 to 372 is the Selectivity filter element; that stretch reads TLGYGD. The stretch at 367–374 is an intramembrane region; that stretch reads TLGYGDMV. The chain crosses the membrane as a helical span at residues 378–400; the sequence is IAGKIFGSICSLSGVLVIALPVP. Residues 401 to 655 are Cytoplasmic-facing; sequence VIVSNFSRIY…TSNVVKVSVL (255 aa). Thr-459 is subject to Phosphothreonine. The interval 470–487 is interaction with KCNIP1 and KCNIP2; the sequence is SLIESQHHHLLHCLEKTT. Positions 474 to 489 are mediates dendritic targeting; the sequence is SQHHHLLHCLEKTTGL. The interval 523-565 is disordered; it reads SSMQNYPSTRSPSLSSHSGLTTTCCSRRSKKTTHLPNSNLPAT. A compositionally biased stretch (low complexity) spans 529–548; it reads PSTRSPSLSSHSGLTTTCCS. The residue at position 569 (Ser-569) is a Phosphoserine; by CaMK2D. A Phosphoserine modification is found at Ser-585. Residues 616–647 form a disordered region; the sequence is SIPTPPALTPEGESRPPPASPGPNTNIPSITS. Positions 637–647 are enriched in polar residues; that stretch reads GPNTNIPSITS.

It belongs to the potassium channel family. D (Shal) (TC 1.A.1.2) subfamily. Kv4.3/KCND3 sub-subfamily. In terms of assembly, homotetramer. Heterotetramer with KCND2. Associates with the regulatory subunits KCNIP3 and KCNIP4. Interacts with KCNE1, KCNE2, SCN1B and KCNAB1 and DLG1. Component of heteromultimeric potassium channels. Identified in potassium channel complexes containing KCND1, KCND2, KCND3, KCNIP1, KCNIP2, KCNIP3, KCNIP4, DPP6 and DPP10. Interacts with KCNIP1; each KCNIP1 monomer interacts with two adjacent KCND3 subunits, through both the N-terminal inactivation ball of a KCND3 subunit and a C-terminal helix from the adjacent KCND3 subunit, clamping them together; this interaction stabilizes the tetrameric form and modulates the channel gating kinetics namely channel activation and inactivation kinetics and rate of recovery from inactivation. Interacts with DPP6; this interaction modulates the channel gating kinetics namely channel activation and inactivation kinetics and rate of recovery from inactivation. Interacts with KCNIP2; each KCNIP2 monomer interacts with two adjacent KCND3 subunits, through both the N-terminal inactivation ball of a KCND3 subunit and a C-terminal helix from the adjacent KCND3 subunit, clamping them together; this interaction modulates the channel gating kinetics. In terms of processing, regulated through phosphorylation at Ser-569 by CaMK2D. As to expression, highly expressed in brain, in particular in the retrosplenial cortex, medial habenula, anterior thalamus, hippocampus, cerebellum and lateral geniculate and superior colliculus. Highly expressed in heart atrium (at protein level) and throughout the ventricle wall, in lung and vas deferens.

The protein localises to the cell membrane. Its subcellular location is the sarcolemma. It localises to the cell projection. The protein resides in the dendrite. It catalyses the reaction K(+)(in) = K(+)(out). Pore-forming (alpha) subunit of voltage-gated A-type potassium channels that mediates transmembrane potassium transport in excitable membranes, in brain and heart. In cardiomyocytes, may generate the transient outward potassium current I(To). In neurons, may conduct the transient subthreshold somatodendritic A-type potassium current (ISA). Kinetics properties are characterized by fast activation at subthreshold membrane potentials, rapid inactivation, and quick recovery from inactivation. Channel properties are modulated by interactions with regulatory subunits. Interaction with the regulatory subunits KCNIP1 or KCNIP2 modulates the channel gating kinetics namely channel activation and inactivation kinetics and rate of recovery from inactivation. Likewise, interaction with DPP6 modulates the channel gating kinetics namely channel activation and inactivation kinetics. The polypeptide is A-type voltage-gated potassium channel KCND3 (Rattus norvegicus (Rat)).